Consider the following 234-residue polypeptide: Transcription factor ILR3 (234 aa).

The interval 34–85 is disordered; it reads QPIGVSSNSSAGVDGSAGNSEASKEPGSKKRGRCESSSATSSKACREKQRRD. Positions 36-54 are enriched in polar residues; sequence IGVSSNSSAGVDGSAGNSE. Positions 71-122 constitute a bHLH domain; that stretch reads SATSSKACREKQRRDRLNDKFMELGAILEPGNPPKTDKAAILVDAVRMVTQL.

As to quaternary structure, homodimer. Interacts with BTS and BHLH47/PYE. As to expression, widely expressed throughout development, mostly in vasculatures.

The protein resides in the nucleus. In terms of biological role, transcription factor. Plays a role in resistance to amide-linked indole-3-acetic acid (IAA) conjugates such as IAA-Leu and IAA-Phe. May regulate gene expression in response to metal homeostasis changes. In Arabidopsis thaliana (Mouse-ear cress), this protein is Transcription factor ILR3 (ILR3).